The chain runs to 183 residues: Adenine phosphoribosyltransferase (183 aa).

The protein belongs to the purine/pyrimidine phosphoribosyltransferase family. Homodimer.

It localises to the cytoplasm. The catalysed reaction is AMP + diphosphate = 5-phospho-alpha-D-ribose 1-diphosphate + adenine. The protein operates within purine metabolism; AMP biosynthesis via salvage pathway; AMP from adenine: step 1/1. Catalyzes a salvage reaction resulting in the formation of AMP, that is energically less costly than de novo synthesis. This is Adenine phosphoribosyltransferase from Edwardsiella ictaluri (strain 93-146).